A 432-amino-acid polypeptide reads, in one-letter code: Serine hydroxymethyltransferase (432 aa).

Residues Leu127 and 131–133 (GHL) each bind (6S)-5,6,7,8-tetrahydrofolate. At Lys236 the chain carries N6-(pyridoxal phosphate)lysine.

Belongs to the SHMT family. In terms of assembly, homodimer. Pyridoxal 5'-phosphate serves as cofactor.

Its subcellular location is the cytoplasm. It carries out the reaction (6R)-5,10-methylene-5,6,7,8-tetrahydrofolate + glycine + H2O = (6S)-5,6,7,8-tetrahydrofolate + L-serine. Its pathway is one-carbon metabolism; tetrahydrofolate interconversion. The protein operates within amino-acid biosynthesis; glycine biosynthesis; glycine from L-serine: step 1/1. Its function is as follows. Catalyzes the reversible interconversion of serine and glycine with tetrahydrofolate (THF) serving as the one-carbon carrier. This reaction serves as the major source of one-carbon groups required for the biosynthesis of purines, thymidylate, methionine, and other important biomolecules. Also exhibits THF-independent aldolase activity toward beta-hydroxyamino acids, producing glycine and aldehydes, via a retro-aldol mechanism. The chain is Serine hydroxymethyltransferase from Rhizobium rhizogenes (strain K84 / ATCC BAA-868) (Agrobacterium radiobacter).